The following is a 600-amino-acid chain: DNA primase (600 aa).

The CHC2-type zinc finger occupies 38–62 (CPFHDEKTPSFIVYPTRGHYHCYGC). The 81-residue stretch at 253–333 (KRVILVEGQA…GIAVIVCRLP (81 aa)) folds into the Toprim domain. 3 residues coordinate Mg(2+): E259, D304, and D306.

This sequence belongs to the DnaG primase family. Monomer. Interacts with DnaB. It depends on Zn(2+) as a cofactor. The cofactor is Mg(2+).

It catalyses the reaction ssDNA + n NTP = ssDNA/pppN(pN)n-1 hybrid + (n-1) diphosphate.. Its function is as follows. RNA polymerase that catalyzes the synthesis of short RNA molecules used as primers for DNA polymerase during DNA replication. The chain is DNA primase from Chlamydia muridarum (strain MoPn / Nigg).